A 470-amino-acid chain; its full sequence is Calcitonin gene-related peptide type 1 receptor (470 aa).

The N-terminal stretch at 1–23 is a signal peptide; sequence MTASCWTICLFLLGSVTEFIVLA. Topologically, residues 24-147 are extracellular; it reads SPEVNESQQQ…HTTEGRRTAM (124 aa). N-linked (GlcNAc...) asparagine glycosylation is found at Asn-28, Asn-74, Asn-126, and Asn-131. Intrachain disulfides connect Cys-56–Cys-82, Cys-73–Cys-113, and Cys-96–Cys-135. A helical membrane pass occupies residues 148–172; sequence NLFYLALIGHGLSLTSLFISLGIFF. Residues 173-183 are Cytoplasmic-facing; that stretch reads HFKSLSCQRIT. A helical transmembrane segment spans residues 184–206; the sequence is LHKNLFFSFVLNSIITIIWLTAV. At 207–217 the chain is on the extracellular side; it reads ANNQELVQQNP. The chain crosses the membrane as a helical span at residues 218-246; sequence ISCKISQFIHLYIFGCNYFWMLCEGIYLH. Residues 247 to 260 are Cytoplasmic-facing; it reads TLIVVAVFAEKQHL. A helical membrane pass occupies residues 261-281; that stretch reads MWYYLLGWGFPLIPATIHAVA. At 282–297 the chain is on the extracellular side; that stretch reads RSYYYNDNCWISSNTS. Asn-295 carries N-linked (GlcNAc...) asparagine glycosylation. The helical transmembrane segment at 298–322 threads the bilayer; it reads LLYIIHGPICAAMLVNLFFLLNIVR. Residues 323 to 337 are Cytoplasmic-facing; that stretch reads VLITKLKVTHQAKSS. A helical transmembrane segment spans residues 338-359; it reads LYMKAVRATLILVPLLGIQYVL. Residues 360–374 are Extracellular-facing; it reads LPYKPSGRVSAEIYD. Residues 375-395 traverse the membrane as a helical segment; that stretch reads YIMHILMHYQGLLVATIFCFF. The Cytoplasmic segment spans residues 396-470; sequence NGEVQAVLRR…AIIKPENPFA (75 aa).

This sequence belongs to the G-protein coupled receptor 2 family.

It localises to the cell membrane. May function as G protein-coupled receptor for calcitonin-gene-related peptides and adrenomedullin. Specificity may be modulated by accessory proteins. May activate cAMP-dependent pathway. This Danio rerio (Zebrafish) protein is Calcitonin gene-related peptide type 1 receptor (calcrla).